A 552-amino-acid chain; its full sequence is 5'-AMP-activated protein kinase catalytic subunit alpha-2 (552 aa).

A Protein kinase domain is found at 16 to 268 (YVLGDTLGVG…IKDIREHEWF (253 aa)). ATP-binding positions include 22-30 (LGVGTFGKV) and lysine 45. Aspartate 139 functions as the Proton acceptor in the catalytic mechanism. Threonine 172 carries the phosphothreonine; by LKB1 and CaMKK2 modification. Threonine 258 carries the phosphothreonine modification. Residues 291–376 (EAVKEVCEKF…PERMPPLIAD (86 aa)) form an AIS region. Serine 377 bears the Phosphoserine mark. The disordered stretch occupies residues 478 to 520 (EQRSGSSTPQRSCSAAGLHRPRSSVDSSTAENHSLSGSLTGSL). A compositionally biased stretch (polar residues) spans 480–490 (RSGSSTPQRSC). Position 491 is a phosphoserine (serine 491). The segment covering 501 to 510 (SVDSSTAENH) has biased composition (polar residues). Residues 511 to 520 (SLSGSLTGSL) show a composition bias toward low complexity.

The protein belongs to the protein kinase superfamily. CAMK Ser/Thr protein kinase family. SNF1 subfamily. AMPK is a heterotrimer of an alpha catalytic subunit (PRKAA1 or PRKAA2), a beta (PRKAB1 or PRKAB2) and a gamma non-catalytic subunits (PRKAG1, PRKAG2 or PRKAG3). Interacts with FNIP1 and FNIP2. Associates with internalized INSR complexes on Golgi/endosomal membranes; PRKAA2/AMPK2 together with ATIC and HACD3/PTPLAD1 is proposed to be part of a signaling network regulating INSR autophosphorylation and endocytosis. Interacts with DUSP29. Interacts with ARF6. The phosphorylated form at Thr-172 mediated by CamKK2 interacts with ACSS2. Requires Mg(2+) as cofactor. Ubiquitinated. In terms of processing, phosphorylated at Thr-172 by STK11/LKB1 in complex with STE20-related adapter-alpha (STRADA) pseudo kinase and CAB39. Also phosphorylated at Thr-172 by CAMKK2; triggered by a rise in intracellular calcium ions, without detectable changes in the AMP/ATP ratio. CAMKK1 can also phosphorylate Thr-172, but at much lower level. Dephosphorylated by protein phosphatase 2A and 2C (PP2A and PP2C). Phosphorylated by ULK1; leading to negatively regulate AMPK activity and suggesting the existence of a regulatory feedback loop between ULK1 and AMPK. Dephosphorylated by PPM1A and PPM1B at Thr-172 (mediated by STK11/LKB1). As to expression, skeletal muscle, lower levels in liver, heart and kidney.

The protein resides in the cytoplasm. It is found in the nucleus. It catalyses the reaction L-seryl-[protein] + ATP = O-phospho-L-seryl-[protein] + ADP + H(+). It carries out the reaction L-threonyl-[protein] + ATP = O-phospho-L-threonyl-[protein] + ADP + H(+). The enzyme catalyses L-seryl-[acetyl-CoA carboxylase] + ATP = O-phospho-L-seryl-[acetyl-CoA carboxylase] + ADP + H(+). The catalysed reaction is L-seryl-[3-hydroxy-3-methylglutaryl-coenzyme A reductase] + ATP = O-phospho-L-seryl-[3-hydroxy-3-methylglutaryl-coenzyme A reductase] + ADP + H(+). Its activity is regulated as follows. Activated by phosphorylation on Thr-172. Binding of AMP to non-catalytic gamma subunit (PRKAG1, PRKAG2 or PRKAG3) results in allosteric activation, inducing phosphorylation on Thr-172. AMP-binding to gamma subunit also sustains activity by preventing dephosphorylation of Thr-172. ADP also stimulates Thr-172 phosphorylation, without stimulating already phosphorylated AMPK. ATP promotes dephosphorylation of Thr-172, rendering the enzyme inactive. Under physiological conditions AMPK mainly exists in its inactive form in complex with ATP, which is much more abundant than AMP. Selectively inhibited by compound C (6-[4-(2-Piperidin-1-yl-ethoxy)-phenyl)]-3-pyridin-4-yl-pyyrazolo[1,5-a] pyrimidine. Activated by resveratrol, a natural polyphenol present in red wine, and S17834, a synthetic polyphenol. Salicylate/aspirin directly activates kinase activity, primarily by inhibiting Thr-172 dephosphorylation. In terms of biological role, catalytic subunit of AMP-activated protein kinase (AMPK), an energy sensor protein kinase that plays a key role in regulating cellular energy metabolism. In response to reduction of intracellular ATP levels, AMPK activates energy-producing pathways and inhibits energy-consuming processes: inhibits protein, carbohydrate and lipid biosynthesis, as well as cell growth and proliferation. AMPK acts via direct phosphorylation of metabolic enzymes, and by longer-term effects via phosphorylation of transcription regulators. Regulates lipid synthesis by phosphorylating and inactivating lipid metabolic enzymes such as ACACA, ACACB, GYS1, HMGCR and LIPE; regulates fatty acid and cholesterol synthesis by phosphorylating acetyl-CoA carboxylase (ACACA and ACACB) and hormone-sensitive lipase (LIPE) enzymes, respectively. Promotes lipolysis of lipid droplets by mediating phosphorylation of isoform 1 of CHKA (CHKalpha2). Regulates insulin-signaling and glycolysis by phosphorylating IRS1, PFKFB2 and PFKFB3. Involved in insulin receptor/INSR internalization. AMPK stimulates glucose uptake in muscle by increasing the translocation of the glucose transporter SLC2A4/GLUT4 to the plasma membrane, possibly by mediating phosphorylation of TBC1D4/AS160. Regulates transcription and chromatin structure by phosphorylating transcription regulators involved in energy metabolism such as CRTC2/TORC2, FOXO3, histone H2B, HDAC5, MEF2C, MLXIPL/ChREBP, EP300, HNF4A, p53/TP53, SREBF1, SREBF2 and PPARGC1A. Acts as a key regulator of glucose homeostasis in liver by phosphorylating CRTC2/TORC2, leading to CRTC2/TORC2 sequestration in the cytoplasm. In response to stress, phosphorylates 'Ser-36' of histone H2B (H2BS36ph), leading to promote transcription. Acts as a key regulator of cell growth and proliferation by phosphorylating FNIP1, TSC2, RPTOR, WDR24 and ATG1/ULK1: in response to nutrient limitation, negatively regulates the mTORC1 complex by phosphorylating RPTOR component of the mTORC1 complex and by phosphorylating and activating TSC2. Also phosphorylates and inhibits GATOR2 subunit WDR24 in response to nutrient limitation, leading to suppress glucose-mediated mTORC1 activation. In response to energetic stress, phosphorylates FNIP1, inactivating the non-canonical mTORC1 signaling, thereby promoting nuclear translocation of TFEB and TFE3, and inducing transcription of lysosomal or autophagy genes. In response to nutrient limitation, promotes autophagy by phosphorylating and activating ATG1/ULK1. In that process, it also activates WDR45/WIPI4. Phosphorylates CASP6, thereby preventing its autoprocessing and subsequent activation. AMPK also acts as a regulator of circadian rhythm by mediating phosphorylation of CRY1, leading to destabilize it. May regulate the Wnt signaling pathway by phosphorylating CTNNB1, leading to stabilize it. Also acts as a regulator of cellular polarity by remodeling the actin cytoskeleton; probably by indirectly activating myosin. Also phosphorylates CFTR, EEF2K, KLC1, NOS3 and SLC12A1. Plays an important role in the differential regulation of pro-autophagy (composed of PIK3C3, BECN1, PIK3R4 and UVRAG or ATG14) and non-autophagy (composed of PIK3C3, BECN1 and PIK3R4) complexes, in response to glucose starvation. Can inhibit the non-autophagy complex by phosphorylating PIK3C3 and can activate the pro-autophagy complex by phosphorylating BECN1. Upon glucose starvation, promotes ARF6 activation in a kinase-independent manner leading to cell migration. Upon glucose deprivation mediates the phosphorylation of ACSS2 at 'Ser-659', which exposes the nuclear localization signal of ACSS2, required for its interaction with KPNA1 and nuclear translocation. Upon stress, regulates mitochondrial fragmentation through phosphorylation of MTFR1L. This Rattus norvegicus (Rat) protein is 5'-AMP-activated protein kinase catalytic subunit alpha-2 (Prkaa2).